Here is a 282-residue protein sequence, read N- to C-terminus: Probable phosphatase C1620.13 (282 aa).

Residue His61 is the Tele-phosphohistidine intermediate of the active site. The active-site Proton donor/acceptor is the Glu135.

Belongs to the phosphoglycerate mutase family. BPG-dependent PGAM subfamily.

Its subcellular location is the nucleus. This Schizosaccharomyces pombe (strain 972 / ATCC 24843) (Fission yeast) protein is Probable phosphatase C1620.13.